The following is a 199-amino-acid chain: Pathogenesis-related 5 protein Cup a 3 (199 aa).

Disulfide bonds link C9–C198, C50–C60, C65–C71, C113–C187, C118–C171, C126–C136, C140–C149, and C150–C158.

Belongs to the thaumatin family. In terms of tissue distribution, expressed in pollen.

The protein resides in the secreted. Its subcellular location is the extracellular space. It is found in the extracellular matrix. The protein localises to the pollen coat. It localises to the cytoplasm. The protein resides in the nucleus. Its subcellular location is the mitochondrion. It is found in the endoplasmic reticulum. The protein localises to the golgi apparatus. It localises to the golgi stack. The protein resides in the vesicle. Its subcellular location is the vacuole. The sequence is that of Pathogenesis-related 5 protein Cup a 3 from Hesperocyparis arizonica (Arizona cypress).